A 590-amino-acid chain; its full sequence is Aspartate--tRNA(Asp/Asn) ligase (590 aa).

Glu-173 is an L-aspartate binding site. The aspartate stretch occupies residues 197 to 200 (QIFK). Arg-219 contacts L-aspartate. Residues 219–221 (RDE) and Gln-228 contribute to the ATP site. Residue His-450 coordinates L-aspartate. Glu-484 provides a ligand contact to ATP. Residue Arg-491 coordinates L-aspartate. 536 to 539 (GLDR) contacts ATP.

The protein belongs to the class-II aminoacyl-tRNA synthetase family. Type 1 subfamily. As to quaternary structure, homodimer.

The protein resides in the cytoplasm. The catalysed reaction is tRNA(Asx) + L-aspartate + ATP = L-aspartyl-tRNA(Asx) + AMP + diphosphate. In terms of biological role, aspartyl-tRNA synthetase with relaxed tRNA specificity since it is able to aspartylate not only its cognate tRNA(Asp) but also tRNA(Asn). Reaction proceeds in two steps: L-aspartate is first activated by ATP to form Asp-AMP and then transferred to the acceptor end of tRNA(Asp/Asn). The chain is Aspartate--tRNA(Asp/Asn) ligase from Coxiella burnetii (strain RSA 493 / Nine Mile phase I).